The chain runs to 138 residues: uncharacterized protein (138 aa).

This is an uncharacterized protein from Escherichia coli (strain K12).